The chain runs to 948 residues: PHD finger protein 14 (948 aa).

A disordered region spans residues 22–302 (DYDSSDDSDF…LSQSKSNEDS (281 aa)). Ser-26 and Ser-29 each carry phosphoserine. Low complexity predominate over residues 36–47 (ASDSEGSGNGSE). The span at 60-71 (DSEENILEEELN) shows a compositional bias: acidic residues. Over residues 72 to 85 (EDIKVKEEQLKNSA) the composition is skewed to basic and acidic residues. 2 positions are modified to phosphoserine: Ser-84 and Ser-91. Composition is skewed to basic and acidic residues over residues 95–110 (QLIK…NGER) and 117–139 (KEKE…EKAT). Residues 140–174 (VSENVAASAAATTPATSPPAVNTSPSVPTTTTATE) are compositionally biased toward low complexity. At Ser-196 the chain carries Phosphoserine. Composition is skewed to acidic residues over residues 199–212 (ELND…EDDN) and 233–256 (DGDN…EGND). At Tyr-206 the chain carries Phosphotyrosine. Ser-208 carries the post-translational modification Phosphoserine. A Phosphothreonine modification is found at Thr-287. Residues 288 to 297 (NDSLTLSQSK) are compositionally biased toward polar residues. Phosphoserine occurs at positions 290, 294, 298, 302, and 308. The PHD-type 1 zinc finger occupies 319–380 (ILICCVCLGD…PWFCDACKCG (62 aa)). The Zn(2+) site is built by Cys-322, Cys-325, Cys-339, Cys-342, His-347, and Cys-350. Ser-359 bears the Phosphoserine mark. Cys-374, Cys-377, Cys-385, Cys-388, His-405, Cys-408, Cys-441, Cys-444, Cys-458, Cys-463, His-468, Cys-471, Cys-495, and His-498 together coordinate Zn(2+). The segment at 382-415 (SPSCELCPNQDGIFKETDAGRWVHIVCALYVPGV) adopts a C2HC pre-PHD-type zinc-finger fold. The PHD-type 2 zinc finger occupies 439 to 499 (KECSFCEDPR…PFFAYCKQHA (61 aa)). Ser-530 is modified (phosphoserine). Positions 630–678 (MIQIQENMAEQKNIKDKLENEQEKLHVEYNKLCESLEELQNLNGKLRSE) form a coiled coil. Glu-648 participates in a covalent cross-link: Glycyl lysine isopeptide (Lys-Gly) (interchain with G-Cter in SUMO2). Gln-651 is modified (phosphoserine). The PHD-type 3 zinc-finger motif lies at 725–779 (LYSCGICKKNHDQHLLLLCDTCKLHYHLGCLDPPLTRMPRKTKNSYWQCSECDQA). Zn(2+) contacts are provided by Cys-728, Cys-731, Cys-743, Cys-746, His-751, Cys-754, Cys-773, and Cys-776. A phosphoserine mark is found at Ser-781, Ser-782, and Ser-835. The interval 811–862 (VPQDVPPEPKKIPIRNTRTRGRKRSFVPEEEKHEERVPRERRQRQSVLQKKP) is disordered. The segment covering 836–850 (FVPEEEKHEERVPRE) has biased composition (basic and acidic residues). The PHD-type 4 zinc-finger motif lies at 868-921 (RTECATCKGTGDNENLVRCDECRLCYHFGCLDPPLKKSPKQTGYGWICQECDSS). Zn(2+)-binding residues include Cys-871, Cys-874, Cys-886, Cys-889, His-894, Cys-897, Cys-915, and Cys-918. The tract at residues 920-948 (SSSSKEDENEAERKNISQELNMEQKNPKK) is disordered. Residues 922-935 (SSKEDENEAERKNI) are compositionally biased toward basic and acidic residues. A compositionally biased stretch (polar residues) spans 936-948 (SQELNMEQKNPKK).

It is found in the nucleus. Its subcellular location is the chromosome. It localises to the cytoplasm. In terms of biological role, histone-binding protein. Binds preferentially to unmodified histone H3 but can also bind to a lesser extent to histone H3 trimethylated at 'Lys-9' (H3K9me3) as well as to histone H3 monomethylated at 'Lys-27' (H3K27ac) and trimethylated at 'Lys-27' (H3K27me3). Represses PDGFRA expression, thus playing a role in regulation of mesenchymal cell proliferation. Suppresses the expression of CDKN1A/p21 by reducing the level of trimethylation of histone H3 'Lys-4', leading to enhanced proliferation of germinal center B cells. In Homo sapiens (Human), this protein is PHD finger protein 14 (PHF14).